Here is a 446-residue protein sequence, read N- to C-terminus: Mitochondrial ribonuclease P protein 1 homolog (446 aa).

Residues Met1–Gln24 constitute a mitochondrion transit peptide. The segment at Pro41–Glu67 is disordered. Phosphoserine is present on residues Ser50 and Ser57. Phosphothreonine is present on Thr60. Phosphoserine is present on Ser62. A coiled-coil region spans residues Leu119–Ile158. In terms of domain architecture, SAM-dependent MTase TRM10-type spans Gln179–Gln373.

It belongs to the class IV-like SAM-binding methyltransferase superfamily. TRM10 family. As to quaternary structure, component of mitochondrial ribonuclease P, a complex composed of rswl/MRPP1, scu/MRPP2 and mldr/MRPP3.

It localises to the mitochondrion. Functionally, mitochondrial tRNA N1-methyltransferase involved in mitochondrial tRNA maturation. Component of mitochondrial ribonuclease P, a complex composed of rswl/MRPP1, scu/MRPP2 and mldr/MRPP3., which cleaves tRNA molecules in their 5'-ends. Essential for the structural and functional integrity of mitochondria. Function is essential for pupal development. This is Mitochondrial ribonuclease P protein 1 homolog from Drosophila melanogaster (Fruit fly).